Reading from the N-terminus, the 322-residue chain is Acetylglutamate kinase (322 aa).

Residues 85–86 (GG), Arg-107, and Asn-211 contribute to the substrate site.

It belongs to the acetylglutamate kinase family. ArgB subfamily.

The protein resides in the cytoplasm. The enzyme catalyses N-acetyl-L-glutamate + ATP = N-acetyl-L-glutamyl 5-phosphate + ADP. Its pathway is amino-acid biosynthesis; L-arginine biosynthesis; N(2)-acetyl-L-ornithine from L-glutamate: step 2/4. In terms of biological role, catalyzes the ATP-dependent phosphorylation of N-acetyl-L-glutamate. In Methanosarcina barkeri (strain Fusaro / DSM 804), this protein is Acetylglutamate kinase.